Consider the following 382-residue polypeptide: Gas vesicle protein C1 (382 aa).

Residues Met1–Ala18 are compositionally biased toward basic and acidic residues. Positions Met1–Gln21 are disordered. 7 consecutive repeat copies span residues Gln22 to Thr60, Asp61 to Gln92, Asp93 to His130, Gly131 to Gln168, Asp169 to Ala200, Asp201 to Glu240, and Asp241 to Asp284. Positions Gln22–Asp284 are 7 X approximate tandem repeats. Residues Gly260 to Glu302 are compositionally biased toward acidic residues. Residues Gly260–Thr382 are disordered. Low complexity predominate over residues Val303–Asp316. Over residues Thr317–Glu336 the composition is skewed to acidic residues. The span at Glu365–Thr382 shows a compositional bias: basic and acidic residues.

It belongs to the halobacterial gas vesicle GvpC family. As to quaternary structure, forms homodimers, interacts with GvpF1, GvpH1, GvpI1, GvpL1, GvpN1 and GvpO1 via its C-terminus (residues 329-382).

The protein localises to the gas vesicle. Its subcellular location is the cytoplasm. Functionally, confers stability, involved in shaping gas vesicles. Gas vesicles are hollow, gas filled proteinaceous nanostructures found in several microbial planktonic microorganisms. They allow positioning of halobacteria at the optimal depth for growth in the poorly aerated, shallow brine pools of their habitat. Expression of a 9.5 kb p-vac DNA fragment containing 2 divergently transcribed regions (gvpD-gvpE-gvpF-gvpG-gvpH-gvpI-gvpJ-gvpK-gvpL-gvpM and gvpA-gvpC-gvpN-gvpO) allows H.volcanii to produce gas vesicles. A similar region restores gas vesicle production in H.halobium without the p-vac locus, but it still has the c-vac locus. The protein is Gas vesicle protein C1 (gvpC1) of Halobacterium salinarum (strain ATCC 700922 / JCM 11081 / NRC-1) (Halobacterium halobium).